The chain runs to 42 residues: Pelovaterin (42 aa).

Cystine bridges form between Cys-8–Cys-38, Cys-16–Cys-32, and Cys-24–Cys-39.

It localises to the secreted. Its subcellular location is the extracellular space. The protein localises to the extracellular matrix. Induces the nucleation and stabilization of vaterite, one of the crystalline polymorphs of calcium carbonate. Exhibits strong antimicrobial activity against Pseudomonas aeruginosa and Proteus vulgaris. The chain is Pelovaterin from Pelodiscus sinensis (Chinese softshell turtle).